A 349-amino-acid chain; its full sequence is Isopentenyl-diphosphate delta-isomerase (349 aa).

9–10 provides a ligand contact to substrate; that stretch reads RK. FMN contacts are provided by residues 65–67, Ser-95, and Asn-124; that span reads AMT. Substrate is bound at residue 95–97; sequence STH. Gln-154 is a substrate binding site. Mg(2+) is bound at residue Glu-155. FMN-binding positions include Lys-186, Ser-211, Thr-216, 262–264, and 283–284; these read GLR and SR.

The protein belongs to the IPP isomerase type 2 family. As to quaternary structure, homooctamer. Dimer of tetramers. The cofactor is FMN. Requires NADPH as cofactor. It depends on Mg(2+) as a cofactor.

Its subcellular location is the cytoplasm. It catalyses the reaction isopentenyl diphosphate = dimethylallyl diphosphate. Involved in the biosynthesis of isoprenoids. Catalyzes the 1,3-allylic rearrangement of the homoallylic substrate isopentenyl (IPP) to its allylic isomer, dimethylallyl diphosphate (DMAPP). The polypeptide is Isopentenyl-diphosphate delta-isomerase (Staphylococcus aureus (strain USA300 / TCH1516)).